We begin with the raw amino-acid sequence, 529 residues long: E3 ubiquitin-protein ligase arih1 (529 aa).

2 disordered regions span residues 1–29 (MDSD…HEDE) and 46–69 (ERAG…EEDE). A compositionally biased stretch (gly residues) spans 51–64 (CGEGGGSALGPGPG). Residues 77 to 125 (TAEQILQHMVECIREVNEVIQNPATITRILLSHFNWDKEKLMERYFDGN) form a UBA-like region. Residues 154–365 (LDMPCQICYL…SAWYNCNRYN (212 aa)) are TRIAD supradomain. Zn(2+)-binding residues include Cys-158, Cys-161, Cys-175, His-177, Cys-180, Cys-183, Cys-203, Cys-208, Cys-248, Cys-253, Cys-269, Cys-271, Cys-276, Cys-279, His-284, Cys-289, Cys-316, and Cys-319. An RING-type 1 zinc finger spans residues 158-208 (CQICYLNYPNSYFTGLECGHKFCMQCWGEYLTTKIIEEGMGQTISCPAHGC). Residues 228-289 (LKYQHLITNS…GENWHDPVKC (62 aa)) form an IBR-type zinc finger. The segment at 316–347 (CPKCHVTIEKDGGCNHMVCRNQNCKAEFCWVC) adopts an RING-type 2; atypical zinc-finger fold. Cys-329 is an active-site residue. Residues Cys-334, Cys-339, Cys-344, Cys-347, His-354, and Cys-361 each contribute to the Zn(2+) site. The ariadne domain stretch occupies residues 380–529 (RAALQRYLFY…EKDLWEYIED (150 aa)).

This sequence belongs to the RBR family. Ariadne subfamily. As to quaternary structure, interacts (via the first RING-type zinc finger) with ube2l3. Associates with cullin-RING ubiquitin ligase (CRL) complexes containing neddylated cullin.

The protein resides in the cytoplasm. It localises to the nucleus. The catalysed reaction is [E2 ubiquitin-conjugating enzyme]-S-ubiquitinyl-L-cysteine + [acceptor protein]-L-lysine = [E2 ubiquitin-conjugating enzyme]-L-cysteine + [acceptor protein]-N(6)-ubiquitinyl-L-lysine.. It functions in the pathway protein modification; protein ubiquitination. Autoinhibited by the ariadne domain, which masks the second RING-type zinc finger that contains the active site and inhibits the E3 activity. Inhibition is relieved upon binding to neddylated cullin-RING ubiquitin ligase complexes, which activate the E3 ligase activity of ARIH1. Functionally, E3 ubiquitin-protein ligase, which catalyzes ubiquitination of target proteins together with ubiquitin-conjugating enzyme E2 ube2l3. Acts as an atypical E3 ubiquitin-protein ligase by working together with cullin-RING ubiquitin ligase (CRL) complexes and initiating ubiquitination of CRL substrates: associates with CRL complexes and specifically mediates addition of the first ubiquitin on CRLs targets. The initial ubiquitin is then elongated. E3 ubiquitin-protein ligase activity is activated upon binding to neddylated cullin-RING ubiquitin ligase complexes. The protein is E3 ubiquitin-protein ligase arih1 (arih1) of Xenopus laevis (African clawed frog).